Consider the following 478-residue polypeptide: Subtilisin-like protease 3 (478 aa).

Residues 1-17 (MKFSTILPILWANCCLC) form the signal peptide. The 98-residue stretch at 70 to 167 (RYVIVFNEDI…FVEQETTVKI (98 aa)) folds into the Inhibitor I9 domain. Residues 177–478 (PWGLHRVSHR…GGGKKLDGFW (302 aa)) form the Peptidase S8 domain. Catalysis depends on charge relay system residues D213, H245, and S407.

Belongs to the peptidase S8 family.

In terms of biological role, serine protease with unknown substrate. The protein is Subtilisin-like protease 3 (YSP3) of Saccharomyces cerevisiae (strain ATCC 204508 / S288c) (Baker's yeast).